A 372-amino-acid chain; its full sequence is NAD(P)H-quinone oxidoreductase subunit 1 (372 aa).

8 consecutive transmembrane segments (helical) span residues 27-47 (IIWL…GVLV), 97-117 (ILFT…WLIV), 128-148 (VGIG…GLLM), 176-196 (LALS…IDIV), 204-224 (ILSW…ICAL), 266-286 (ILSA…PIPV), 308-328 (SIGI…AILL), and 347-367 (FLLP…LAFP).

It belongs to the complex I subunit 1 family. In terms of assembly, NDH-1 is composed of at least 11 different subunits.

The protein localises to the cellular thylakoid membrane. It catalyses the reaction a plastoquinone + NADH + (n+1) H(+)(in) = a plastoquinol + NAD(+) + n H(+)(out). The catalysed reaction is a plastoquinone + NADPH + (n+1) H(+)(in) = a plastoquinol + NADP(+) + n H(+)(out). NDH-1 shuttles electrons from an unknown electron donor, via FMN and iron-sulfur (Fe-S) centers, to quinones in the respiratory and/or the photosynthetic chain. The immediate electron acceptor for the enzyme in this species is believed to be plastoquinone. Couples the redox reaction to proton translocation, and thus conserves the redox energy in a proton gradient. This is NAD(P)H-quinone oxidoreductase subunit 1 from Prochlorococcus marinus (strain MIT 9301).